The following is a 294-amino-acid chain: Glyceraldehyde-3-phosphate dehydrogenase (294 aa).

Positions 19, 63, and 105 each coordinate NAD(+). D-glyceraldehyde 3-phosphate is bound by residues 134–136 (SCT), Thr165, 194–195 (TG), and Arg217. Cys135 (nucleophile) is an active-site residue.

It belongs to the glyceraldehyde-3-phosphate dehydrogenase family. Homotetramer.

Its subcellular location is the cytoplasm. The catalysed reaction is D-glyceraldehyde 3-phosphate + phosphate + NAD(+) = (2R)-3-phospho-glyceroyl phosphate + NADH + H(+). The protein operates within carbohydrate degradation; glycolysis; pyruvate from D-glyceraldehyde 3-phosphate: step 1/5. In terms of biological role, catalyzes the oxidative phosphorylation of glyceraldehyde 3-phosphate (G3P) to 1,3-bisphosphoglycerate (BPG) using the cofactor NAD. The first reaction step involves the formation of a hemiacetal intermediate between G3P and a cysteine residue, and this hemiacetal intermediate is then oxidized to a thioester, with concomitant reduction of NAD to NADH. The reduced NADH is then exchanged with the second NAD, and the thioester is attacked by a nucleophilic inorganic phosphate to produce BPG. This is Glyceraldehyde-3-phosphate dehydrogenase (gap) from Shimwellia blattae (Escherichia blattae).